The sequence spans 439 residues: Kinesin-like protein KIN-13 (439 aa).

1–5 (GSGKS) is a binding site for ATP. The Kinesin motor domain maps to 1–240 (GSGKSFTMMH…LRYADRVKEL (240 aa)).

The protein belongs to the TRAFAC class myosin-kinesin ATPase superfamily. Kinesin family. KIN-13 subfamily. In terms of assembly, interacts with PLK. Phosphorylated by PLK.

It localises to the cytoplasm. The protein resides in the cytoskeleton. Its subcellular location is the cell projection. It is found in the cilium. The protein localises to the flagellum. It localises to the flagellum basal body. The protein resides in the flagellum axoneme. Its subcellular location is the spindle. It is found in the chromosome. The protein localises to the centromere. It localises to the kinetochore. Functionally, involved in cell cycle. Involved in formation of flagella, regulation of flagellar length, and formation of median bodies during interphase. Regulates flagellar length in all eight distal flagellar tips by promoting disassembly of the microtubules. Disassembles microtubules at the distal flagellar tips in a length-dependent manner in order to maintain different equilibrium lengths of the four flagellar pairs. Regulates interphase and mitotic microtubule dynamics. Regulates microtubule disassembly dynamics of the dual mitotic spindles and the median body. This chain is Kinesin-like protein KIN-13, found in Giardia intestinalis (Giardia lamblia).